We begin with the raw amino-acid sequence, 436 residues long: MSRPLTKVTQQGDRIAIVSGLRIPFAKQATSYHDIPAVDLGKSVVSELVTRSGLLPEKIDQLVFGQVVQMPEAPNIAREIVLGAGLSVSTDAYSVSRACATSFQAIANVAESIMAGTVNIGIAGGADSSSVLPIGVTKSLARTLVEMNKAKTLSQRLKLLSRLKFRDLLPVSPAVAEYSTGLRMGDTAEQMAKTYRISREDQDALAHRSHILAAKAWEQGLLVDEVMTAHFPPYREALLEDNNIRKNSVLTSYAKLRPAFDRKYGTVTAANSTPLTDGAAAVILMRESVAKALGTKPLGYLRSYAFSAIDVWQDMLLGPSYATPIALDRAGITLKDLTLIDMHEAFAAQTLANLKMFASDEFARNKLGRAQAIGEVDMDKFNVLGGSIAYGHPFAATGARMVTQVLNELRRRGGGLGLTTACAAGGLGTAMVLEVE.

The Acyl-thioester intermediate role is filled by C99. Catalysis depends on proton acceptor residues H392 and C422.

This sequence belongs to the thiolase-like superfamily. Thiolase family. As to quaternary structure, heterotetramer of two alpha chains (FadJ) and two beta chains (FadI).

It is found in the cytoplasm. It carries out the reaction an acyl-CoA + acetyl-CoA = a 3-oxoacyl-CoA + CoA. The protein operates within lipid metabolism; fatty acid beta-oxidation. In terms of biological role, catalyzes the final step of fatty acid oxidation in which acetyl-CoA is released and the CoA ester of a fatty acid two carbons shorter is formed. This is 3-ketoacyl-CoA thiolase from Photorhabdus laumondii subsp. laumondii (strain DSM 15139 / CIP 105565 / TT01) (Photorhabdus luminescens subsp. laumondii).